The chain runs to 639 residues: Synaptotagmin-16 (639 aa).

Positions 95–119 (NSDLQDSVQTASPTLGQQAEDSSSV) are enriched in polar residues. The interval 95–191 (NSDLQDSVQT…SSESDEDVTK (97 aa)) is disordered. Pro residues predominate over residues 121–134 (PPWPSKIPGAPKPQ). Positions 142-151 (EEDHHSERQR) are enriched in basic and acidic residues. A compositionally biased stretch (acidic residues) spans 174–187 (GDDEEPSTSSESDE). The 120-residue stretch at 344-463 (KCGDLDVIFE…HPEGEMKVTL (120 aa)) folds into the C2 1 domain. The segment at 470–496 (NLSSGESPLSPSVVSHSDSASSTQSLS) is disordered. The segment covering 476-496 (SPLSPSVVSHSDSASSTQSLS) has biased composition (low complexity). Positions 499-634 (GVPELLVGLS…SKGQQTCRWH (136 aa)) constitute a C2 2 domain.

It belongs to the synaptotagmin family. As to quaternary structure, homodimer. Can also form heterodimers. In terms of tissue distribution, highly expressed in heart and testis. Moderately expressed in kidney.

Its function is as follows. May be involved in the trafficking and exocytosis of secretory vesicles in non-neuronal tissues. Is Ca(2+)-independent. This is Synaptotagmin-16 (Syt16) from Mus musculus (Mouse).